A 67-amino-acid chain; its full sequence is Nigrocin-2GRc (67 aa).

An N-terminal signal peptide occupies residues 1–22; that stretch reads MFTMKKSMLLLFFLGTISLSLC. Positions 23–46 are excised as a propeptide; that stretch reads EQERNADEEERRDEEVAKMEEIKR. Cysteine 61 and cysteine 67 are disulfide-bonded.

Expressed by the skin glands.

The protein localises to the secreted. Antimicrobial peptide active at least against the Gram-positive bacterium S.aureus but with otherwise unclear activity spectrum. Lacks hemolytic activity against rabbit or human erythrocytes. The polypeptide is Nigrocin-2GRc (Odorrana grahami (Yunnanfu frog)).